The sequence spans 218 residues: Peptide methionine sulfoxide reductase MsrA (218 aa).

The active site involves C57.

Belongs to the MsrA Met sulfoxide reductase family.

It catalyses the reaction L-methionyl-[protein] + [thioredoxin]-disulfide + H2O = L-methionyl-(S)-S-oxide-[protein] + [thioredoxin]-dithiol. The enzyme catalyses [thioredoxin]-disulfide + L-methionine + H2O = L-methionine (S)-S-oxide + [thioredoxin]-dithiol. Has an important function as a repair enzyme for proteins that have been inactivated by oxidation. Catalyzes the reversible oxidation-reduction of methionine sulfoxide in proteins to methionine. In Brucella abortus (strain S19), this protein is Peptide methionine sulfoxide reductase MsrA.